A 343-amino-acid polypeptide reads, in one-letter code: Ribosomal RNA small subunit methyltransferase, chloroplastic (343 aa).

Residues 1 to 48 (MMNAVITSATINCNSLSPSWTCGDNSPSKLLLGEISAALSRRRTVKVS) constitute a chloroplast transit peptide. The S-adenosyl-L-methionine site is built by H78, M80, G105, E126, D151, and N183.

This sequence belongs to the class I-like SAM-binding methyltransferase superfamily. rRNA adenine N(6)-methyltransferase family.

It localises to the plastid. It is found in the chloroplast. In terms of biological role, required for methylation of the 3' adenosines in the small subunit of plastid rRNA. Essential for chloroplast biogenesis at low temperatures. This chain is Ribosomal RNA small subunit methyltransferase, chloroplastic, found in Arabidopsis thaliana (Mouse-ear cress).